The primary structure comprises 170 residues: NADH-quinone oxidoreductase subunit B (170 aa).

Positions 37, 38, 102, and 131 each coordinate [4Fe-4S] cluster.

This sequence belongs to the complex I 20 kDa subunit family. NDH-1 is composed of 14 different subunits. Subunits NuoB, C, D, E, F, and G constitute the peripheral sector of the complex. The cofactor is [4Fe-4S] cluster.

The protein localises to the cell inner membrane. It carries out the reaction a quinone + NADH + 5 H(+)(in) = a quinol + NAD(+) + 4 H(+)(out). In terms of biological role, NDH-1 shuttles electrons from NADH, via FMN and iron-sulfur (Fe-S) centers, to quinones in the respiratory chain. The immediate electron acceptor for the enzyme in this species is believed to be ubiquinone. Couples the redox reaction to proton translocation (for every two electrons transferred, four hydrogen ions are translocated across the cytoplasmic membrane), and thus conserves the redox energy in a proton gradient. This is NADH-quinone oxidoreductase subunit B from Geotalea daltonii (strain DSM 22248 / JCM 15807 / FRC-32) (Geobacter daltonii).